We begin with the raw amino-acid sequence, 451 residues long: UDP-N-acetylmuramoylalanine--D-glutamate ligase (451 aa).

119–125 serves as a coordination point for ATP; sequence GSNGKTT.

This sequence belongs to the MurCDEF family.

It localises to the cytoplasm. It carries out the reaction UDP-N-acetyl-alpha-D-muramoyl-L-alanine + D-glutamate + ATP = UDP-N-acetyl-alpha-D-muramoyl-L-alanyl-D-glutamate + ADP + phosphate + H(+). It participates in cell wall biogenesis; peptidoglycan biosynthesis. Cell wall formation. Catalyzes the addition of glutamate to the nucleotide precursor UDP-N-acetylmuramoyl-L-alanine (UMA). The chain is UDP-N-acetylmuramoylalanine--D-glutamate ligase from Streptococcus agalactiae serotype III (strain NEM316).